A 129-amino-acid chain; its full sequence is Iron-sulfur cluster assembly 1 homolog, mitochondrial (129 aa).

A mitochondrion-targeting transit peptide spans 1 to 12 (MASSVVRATVRA). Positions 57, 121, and 123 each coordinate Fe cation.

Belongs to the HesB/IscA family.

The protein resides in the mitochondrion. Its function is as follows. Involved in the maturation of mitochondrial 4Fe-4S proteins functioning late in the iron-sulfur cluster assembly pathway. Probably involved in the binding of an intermediate of Fe/S cluster assembly. This chain is Iron-sulfur cluster assembly 1 homolog, mitochondrial (ISCA1), found in Gallus gallus (Chicken).